A 551-amino-acid chain; its full sequence is MHCERFICILRIIGTTLFGVSLLLGISAAYIVGYQFIQTDNYYFSFGLYGAILALHLIIQSLFAFLEHRKMKRSLETPIKLNKSVALCIAAYQEDEDYLRKCLLSVKRLTYPGMKVIMVIDGNSDDDLYMMNIFREIMGNDSCATYVWKNNFHMKGPNETDETHRESMQHVTQMVLSNRNVCIMQKWNGKREVMYTAFKALGRSVDYVQVCDSDTVLDPASSVEMVKVLEEDIMVGGVGGDVQILNKYDSWISFLSSVRYWMAFNIERACQSYFGCVQCISGPLGMYRNSLLHEFIEDWYNQEFLGSQCSFGDDRHLTNRVLSLGYATKYTARSKCLTETPTEYLRWLNQQTRWSKSYFREWLYNSLWFHKHHLWMTYEAVITGFFPFFLIATVIQLFYRGRIWNILLFLLTVQLVGLIKSSFASALRGNIVMVFMSFYSVLYMSSLLPAKMFAIATINKAGWGTSGRKTIVVNFIGLIPITVWFTILLGGVCYTIWRETKKPFSESEKIVLAVGAILYACYWVMLLTMYVSLVMKCGRRRKEPQHDLVLA.

Residues 1-11 (MHCERFICILR) are Cytoplasmic-facing. The chain crosses the membrane as a helical span at residues 12–32 (IIGTTLFGVSLLLGISAAYIV). At 33 to 45 (GYQFIQTDNYYFS) the chain is on the extracellular side. A helical transmembrane segment spans residues 46–66 (FGLYGAILALHLIIQSLFAFL). Residues 67 to 374 (EHRKMKRSLE…NSLWFHKHHL (308 aa)) are Cytoplasmic-facing. Residues 375–395 (WMTYEAVITGFFPFFLIATVI) form a helical membrane-spanning segment. Topologically, residues 396-402 (QLFYRGR) are extracellular. Residues 403-423 (IWNILLFLLTVQLVGLIKSSF) traverse the membrane as a helical segment. At 424-429 (ASALRG) the chain is on the cytoplasmic side. Residues 430–450 (NIVMVFMSFYSVLYMSSLLPA) traverse the membrane as a helical segment. Topologically, residues 451–470 (KMFAIATINKAGWGTSGRKT) are extracellular. A helical transmembrane segment spans residues 471–491 (IVVNFIGLIPITVWFTILLGG). Residues 492-509 (VCYTIWRETKKPFSESEK) are Cytoplasmic-facing. The helical transmembrane segment at 510 to 530 (IVLAVGAILYACYWVMLLTMY) threads the bilayer. The Extracellular portion of the chain corresponds to 531–551 (VSLVMKCGRRRKEPQHDLVLA).

Belongs to the NodC/HAS family. In terms of assembly, homodimer; dimerization promotes enzymatic activity. It depends on Mg(2+) as a cofactor.

The protein resides in the cell membrane. The protein localises to the endoplasmic reticulum membrane. Its subcellular location is the vesicle. It is found in the golgi apparatus membrane. It localises to the lysosome. The enzyme catalyses [hyaluronan](n) + UDP-N-acetyl-alpha-D-glucosamine = N-acetyl-beta-D-glucosaminyl-(1-&gt;4)-[hyaluronan](n) + UDP + H(+). It carries out the reaction N-acetyl-beta-D-glucosaminyl-(1-&gt;4)-[hyaluronan](n) + UDP-alpha-D-glucuronate = [hyaluronan](n+1) + UDP + H(+). It participates in glycan biosynthesis; hyaluronan biosynthesis. In terms of biological role, catalyzes the addition of GlcNAc or GlcUA monosaccharides to the nascent hyaluronan polymer. Therefore, it is essential to hyaluronan synthesis a major component of most extracellular matrices that has a structural role in tissues architectures and regulates cell adhesion, migration and differentiation. This is one of three isoenzymes responsible for cellular hyaluronan synthesis and it is particularly responsible for the synthesis of high molecular mass hyaluronan. In Xenopus laevis (African clawed frog), this protein is Hyaluronan synthase 2 (has2).